The chain runs to 429 residues: Serine--tRNA ligase (429 aa).

Residue 228–230 (TSE) coordinates L-serine. Residue 259–261 (RAE) coordinates ATP. Glu-282 serves as a coordination point for L-serine. 346–349 (EISS) serves as a coordination point for ATP. Ser-384 lines the L-serine pocket.

Belongs to the class-II aminoacyl-tRNA synthetase family. Type-1 seryl-tRNA synthetase subfamily. Homodimer. The tRNA molecule binds across the dimer.

The protein localises to the cytoplasm. The catalysed reaction is tRNA(Ser) + L-serine + ATP = L-seryl-tRNA(Ser) + AMP + diphosphate + H(+). It catalyses the reaction tRNA(Sec) + L-serine + ATP = L-seryl-tRNA(Sec) + AMP + diphosphate + H(+). It functions in the pathway aminoacyl-tRNA biosynthesis; selenocysteinyl-tRNA(Sec) biosynthesis; L-seryl-tRNA(Sec) from L-serine and tRNA(Sec): step 1/1. In terms of biological role, catalyzes the attachment of serine to tRNA(Ser). Is also able to aminoacylate tRNA(Sec) with serine, to form the misacylated tRNA L-seryl-tRNA(Sec), which will be further converted into selenocysteinyl-tRNA(Sec). The protein is Serine--tRNA ligase of Anaplasma marginale (strain St. Maries).